A 405-amino-acid chain; its full sequence is Probable tRNA sulfurtransferase (405 aa).

Positions 60–165 (AEVDKRLKKV…QDAVYISNQL (106 aa)) constitute a THUMP domain. ATP-binding positions include 183 to 184 (ML), 208 to 209 (HF), arginine 265, glycine 287, and glutamine 296.

It belongs to the ThiI family.

The protein localises to the cytoplasm. It carries out the reaction [ThiI sulfur-carrier protein]-S-sulfanyl-L-cysteine + a uridine in tRNA + 2 reduced [2Fe-2S]-[ferredoxin] + ATP + H(+) = [ThiI sulfur-carrier protein]-L-cysteine + a 4-thiouridine in tRNA + 2 oxidized [2Fe-2S]-[ferredoxin] + AMP + diphosphate. It catalyses the reaction [ThiS sulfur-carrier protein]-C-terminal Gly-Gly-AMP + S-sulfanyl-L-cysteinyl-[cysteine desulfurase] + AH2 = [ThiS sulfur-carrier protein]-C-terminal-Gly-aminoethanethioate + L-cysteinyl-[cysteine desulfurase] + A + AMP + 2 H(+). The protein operates within cofactor biosynthesis; thiamine diphosphate biosynthesis. In terms of biological role, catalyzes the ATP-dependent transfer of a sulfur to tRNA to produce 4-thiouridine in position 8 of tRNAs, which functions as a near-UV photosensor. Also catalyzes the transfer of sulfur to the sulfur carrier protein ThiS, forming ThiS-thiocarboxylate. This is a step in the synthesis of thiazole, in the thiamine biosynthesis pathway. The sulfur is donated as persulfide by IscS. This chain is Probable tRNA sulfurtransferase, found in Lactobacillus helveticus (strain DPC 4571).